A 601-amino-acid polypeptide reads, in one-letter code: Bifunctional ribose 1,5-bisphosphokinase-thymidine phosphorylase (601 aa).

The tract at residues 1–177 (MKATGTFFFV…EAGTARFVEA (177 aa)) is ribose 1,5-bisphosphokinase. The interval 178–601 (LRTGTRTSAA…CCQAVRIDPD (424 aa)) is thymidinephosphorylase.

This sequence in the N-terminal section; belongs to the ribose 1,5-bisphosphokinase family. The protein in the C-terminal section; belongs to the thymidine/pyrimidine-nucleoside phosphorylase family. Type 2 subfamily.

It carries out the reaction alpha-D-ribose 1,5-bisphosphate + ATP = 5-phospho-alpha-D-ribose 1-diphosphate + ADP. It catalyses the reaction thymidine + phosphate = 2-deoxy-alpha-D-ribose 1-phosphate + thymine. The protein operates within metabolic intermediate biosynthesis; 5-phospho-alpha-D-ribose 1-diphosphate biosynthesis; 5-phospho-alpha-D-ribose 1-diphosphate from D-ribose 5-phosphate (route II): step 3/3. Its function is as follows. Catalyzes the phosphorylation of ribose 1,5-bisphosphate to 5-phospho-D-ribosyl alpha-1-diphosphate (PRPP). This chain is Bifunctional ribose 1,5-bisphosphokinase-thymidine phosphorylase (phnN), found in Cupriavidus necator (strain ATCC 17699 / DSM 428 / KCTC 22496 / NCIMB 10442 / H16 / Stanier 337) (Ralstonia eutropha).